A 335-amino-acid chain; its full sequence is MQSTHSIAELVTRQKRHDYRFLAILTCLFLLVFFLSLCAGENWIWPNKWFSETGQLFVWQLRFPRVLAVVAVGASLTVAGAVMQALFENPLAEPGLLGVSNGAGVVVVFLVLMFHGIAPFWLLSIGAVLGALTVTMILLTFSRNRYLNNARLLLVGVAFGVASGALMTWMVYFSTSLDLRQLMYWMMGSFSGIDWRHQWLVVALFPLIIWLSRQGKVLNFLSLGETQAQQLGISLYYWRNLFVFAVGLLVGLSVALAGTISFIGLVIPHILRLCGLTDYKTLLPACVLSGGYGLLLADLLSRLSLNNAEVPIGVVTATLGAPVFIWLLLRVRDWS.

9 helical membrane-spanning segments follow: residues 21–43, 63–82, 95–114, 119–141, 153–175, 195–212, 244–266, 281–303, and 310–329; these read FLAI…GENW, FPRV…AGAV, GLLG…VLMF, PFWL…LLTF, LLVG…YFST, WRHQ…IWLS, FAVG…IGLV, TLLP…LSRL, and VPIG…WLLL.

Belongs to the binding-protein-dependent transport system permease family. FecCD subfamily. As to quaternary structure, the complex is composed of two ATP-binding proteins (BtuD), two transmembrane proteins (BtuC) and a solute-binding protein (BtuF).

It localises to the cell inner membrane. In terms of biological role, part of the ABC transporter complex BtuCDF involved in vitamin B12 import. Involved in the translocation of the substrate across the membrane. The chain is Vitamin B12 import system permease protein BtuC from Photorhabdus laumondii subsp. laumondii (strain DSM 15139 / CIP 105565 / TT01) (Photorhabdus luminescens subsp. laumondii).